The chain runs to 66 residues: MILVNVHAGNCDNTLKNFKKKLQRELYFRKMKEQRYYEPKSVKRVRKAQEAARRKRKFARKRMYED.

The tract at residues Lys47–Asp66 is disordered. The span at Arg53–Asp66 shows a compositional bias: basic residues.

The protein belongs to the bacterial ribosomal protein bS21 family.

The sequence is that of Small ribosomal subunit protein bS21 from Rickettsia bellii (strain RML369-C).